A 382-amino-acid polypeptide reads, in one-letter code: MGSAVRIAMVAGEASGDLLASHLIAALKTHLPDAVFYGIGGPKMQAQGFDSWWPMEKLSVMGYWDALKHYREIAGIRRQLKKRLLDLKPDIFIGVDAPDFNLGLETNLKAAGVRTIHYVSPSIWAWRGGRVKKIAKAVNRVLALFPMEPALYEKERVPVTYVGHPLADIIPLQTSKQAVREKLSLPRDYPIFAMLPGSRQGELAMMAETFVETAKIIRERHLPNAMFVVPLATRETRLQFELAIYNRQAGDVPFRLLFGHAQDALGAADVSLVASGTATLEAALIKRPMVITYKIAKFSYWLMKRMAYLPYVGLPNVLAGRFVVPEILQDEATPENLAEALVKLYEDKENAEAVEEAFTEIHLQLRQNTAEKAARAVIECLN.

It belongs to the LpxB family.

It catalyses the reaction a lipid X + a UDP-2-N,3-O-bis[(3R)-3-hydroxyacyl]-alpha-D-glucosamine = a lipid A disaccharide + UDP + H(+). Its pathway is bacterial outer membrane biogenesis; LPS lipid A biosynthesis. Functionally, condensation of UDP-2,3-diacylglucosamine and 2,3-diacylglucosamine-1-phosphate to form lipid A disaccharide, a precursor of lipid A, a phosphorylated glycolipid that anchors the lipopolysaccharide to the outer membrane of the cell. The sequence is that of Lipid-A-disaccharide synthase from Dechloromonas aromatica (strain RCB).